We begin with the raw amino-acid sequence, 134 residues long: Psoriasis susceptibility 1 candidate gene 2 protein homolog (134 aa).

Positions 1–21 (MLTWKLLGLLVLCLCAGGISG) are cleaved as a signal peptide. A disordered region spans residues 18–134 (GISGNGDPSP…DLDPPQEEYR (117 aa)). 2 stretches are compositionally biased toward pro residues: residues 39 to 67 (PPLPLGPPIPGDPWPGAPPLFDEPPPPGS) and 81 to 98 (PPKPPSTDPPKPPLPDDP). Residues 122–134 (EEPDLDPPQEEYR) show a composition bias toward acidic residues.

It localises to the secreted. This is Psoriasis susceptibility 1 candidate gene 2 protein homolog (Psors1c2) from Mus musculus (Mouse).